The chain runs to 287 residues: 3-methyl-2-oxobutanoate hydroxymethyltransferase (287 aa).

Residues Met1–Pro19 are compositionally biased toward polar residues. The interval Met1–Met24 is disordered. Positions 66 and 105 each coordinate Mg(2+). 3-methyl-2-oxobutanoate is bound by residues Asp66–Ser67, Asp105, and Lys135. Glu137 is a Mg(2+) binding site. Glu204 (proton acceptor) is an active-site residue.

This sequence belongs to the PanB family. Homodecamer; pentamer of dimers. The cofactor is Mg(2+).

It is found in the cytoplasm. The catalysed reaction is 3-methyl-2-oxobutanoate + (6R)-5,10-methylene-5,6,7,8-tetrahydrofolate + H2O = 2-dehydropantoate + (6S)-5,6,7,8-tetrahydrofolate. It functions in the pathway cofactor biosynthesis; (R)-pantothenate biosynthesis; (R)-pantoate from 3-methyl-2-oxobutanoate: step 1/2. Its function is as follows. Catalyzes the reversible reaction in which hydroxymethyl group from 5,10-methylenetetrahydrofolate is transferred onto alpha-ketoisovalerate to form ketopantoate. The chain is 3-methyl-2-oxobutanoate hydroxymethyltransferase from Sphingopyxis alaskensis (strain DSM 13593 / LMG 18877 / RB2256) (Sphingomonas alaskensis).